The following is a 411-amino-acid chain: Cladofulvin cluster transcriptional coactivator claA (411 aa).

A compositionally biased stretch (polar residues) spans 1–27 (MSDSLAGNGMRQNLNRSSTSSNHTGHA). A disordered region spans residues 1–32 (MSDSLAGNGMRQNLNRSSTSSNHTGHAQNGRA). The HTH iclR-type domain maps to 47 to 117 (LACQVQSLAC…DPGHIAHTAL (71 aa)). The H-T-H motif DNA-binding region spans 77–96 (LHDVAELANVPASQLSRVVR).

It is found in the nucleus. Functionally, transcriptional coactivator; part of the gene cluster that mediates the biosynthesis of cladofulvin, a conidial pigment not required for virulence but that plays a role in fitness and resistance to environmental stresses including UV light and low-temperature stress. With claE, coregulates the production of cladofulvin. This chain is Cladofulvin cluster transcriptional coactivator claA, found in Passalora fulva (Tomato leaf mold).